Consider the following 102-residue polypeptide: Large ribosomal subunit protein uL24 (102 aa).

The protein belongs to the universal ribosomal protein uL24 family. In terms of assembly, part of the 50S ribosomal subunit.

One of two assembly initiator proteins, it binds directly to the 5'-end of the 23S rRNA, where it nucleates assembly of the 50S subunit. Functionally, one of the proteins that surrounds the polypeptide exit tunnel on the outside of the subunit. The chain is Large ribosomal subunit protein uL24 from Alcanivorax borkumensis (strain ATCC 700651 / DSM 11573 / NCIMB 13689 / SK2).